The following is a 452-amino-acid chain: Glutamate--tRNA ligase 2 (452 aa).

A 'HIGH' region motif is present at residues 8 to 18 (PSPTGRLHVGN). A 'KMSKS' region motif is present at residues 246-250 (KLSKR). Residue K249 coordinates ATP.

Belongs to the class-I aminoacyl-tRNA synthetase family. Glutamate--tRNA ligase type 1 subfamily. Monomer.

It localises to the cytoplasm. The catalysed reaction is tRNA(Glu) + L-glutamate + ATP = L-glutamyl-tRNA(Glu) + AMP + diphosphate. Functionally, catalyzes the attachment of glutamate to tRNA(Glu) in a two-step reaction: glutamate is first activated by ATP to form Glu-AMP and then transferred to the acceptor end of tRNA(Glu). This is Glutamate--tRNA ligase 2 from Erythrobacter litoralis (strain HTCC2594).